The following is a 118-amino-acid chain: Large ribosomal subunit protein bL20 (118 aa).

Belongs to the bacterial ribosomal protein bL20 family.

Functionally, binds directly to 23S ribosomal RNA and is necessary for the in vitro assembly process of the 50S ribosomal subunit. It is not involved in the protein synthesizing functions of that subunit. In Shigella flexneri serotype 5b (strain 8401), this protein is Large ribosomal subunit protein bL20.